We begin with the raw amino-acid sequence, 58 residues long: UPF0391 membrane protein Shew185_1413 (58 aa).

2 helical membrane-spanning segments follow: residues 6–26 and 28–48; these read LVFL…IAGA and AGIA…SLLI.

It belongs to the UPF0391 family.

The protein resides in the cell membrane. This Shewanella baltica (strain OS185) protein is UPF0391 membrane protein Shew185_1413.